Consider the following 347-residue polypeptide: Ribosomal RNA large subunit methyltransferase M (347 aa).

S-adenosyl-L-methionine-binding positions include S184, 217–220 (APGG), D236, D256, and D272. The Proton acceptor role is filled by K301.

This sequence belongs to the class I-like SAM-binding methyltransferase superfamily. RNA methyltransferase RlmE family. RlmM subfamily. Monomer.

The protein resides in the cytoplasm. The enzyme catalyses cytidine(2498) in 23S rRNA + S-adenosyl-L-methionine = 2'-O-methylcytidine(2498) in 23S rRNA + S-adenosyl-L-homocysteine + H(+). In terms of biological role, catalyzes the 2'-O-methylation at nucleotide C2498 in 23S rRNA. This chain is Ribosomal RNA large subunit methyltransferase M, found in Xanthomonas oryzae pv. oryzae (strain KACC10331 / KXO85).